Consider the following 248-residue polypeptide: Serine/arginine-rich splicing factor 1 (248 aa).

Serine 2 carries the post-translational modification N-acetylserine. Serine 2 carries the post-translational modification Phosphoserine. The region spanning 16 to 91 (CRIYVGNLPP…YRLRVEFPRS (76 aa)) is the RRM 1 domain. Lysine 30 is covalently cross-linked (Glycyl lysine isopeptide (Lys-Gly) (interchain with G-Cter in SUMO2)). At lysine 38 the chain carries N6-acetyllysine; alternate. A Glycyl lysine isopeptide (Lys-Gly) (interchain with G-Cter in SUMO2); alternate cross-link involves residue lysine 38. The segment at 88–134 (FPRSGRGTGRGGGGGGGGGAPRGRYGPPSRRSENRVVVSGLPPSGSW) is disordered. Asymmetric dimethylarginine; alternate occurs at positions 93, 97, and 109. Omega-N-methylarginine; alternate occurs at positions 93, 97, and 109. Gly residues predominate over residues 93 to 108 (RGTGRGGGGGGGGGAP). At arginine 111 the chain carries Omega-N-methylarginine. Residues 121–195 (NRVVVSGLPP…ETAYIRVKVD (75 aa)) form the RRM 2 domain. Phosphoserine is present on serine 133. The residue at position 179 (lysine 179) is an N6-acetyllysine. Residues 191–248 (RVKVDGPRSPSYGRSRSRSRSRSRSRSRSNSRSRSYSPRRSRGSPRYSPRHSRSRSRT) form a disordered region. Residues 198 to 247 (RSPSYGRSRSRSRSRSRSRSRSNSRSRSYSPRRSRGSPRYSPRHSRSRSR) are interaction with SAFB1. A phosphoserine mark is found at serine 199 and serine 201. Tyrosine 202 is subject to Phosphotyrosine. Phosphoserine occurs at positions 205, 207, 209, 231, 234, and 238. The span at 205-248 (SRSRSRSRSRSRSRSNSRSRSYSPRRSRGSPRYSPRHSRSRSRT) shows a compositional bias: basic residues.

This sequence belongs to the splicing factor SR family. Consists of two polypeptides of p32 and p33. Identified in the spliceosome C complex. Component of a ribonucleoprotein complex containing mRNAs and RNA-binding proteins including DDX5, HNRNPH2 and SRSF1 as well as splicing regulator ARVCF. In vitro, self-associates and binds SRSF2, SNRNP70 and U2AF1 but not U2AF2. Binds SREK1/SFRS12. Interacts with SAFB/SAFB1. Interacts with PSIP1/LEDGF. Interacts with RSRC1 (via Arg/Ser-rich domain). Interacts with ZRSR2/U2AF1-RS2. Interacts with CCDC55 (via C-terminus). Interacts with SRPK1 and a sliding docking interaction is essential for its sequential and processive phosphorylation by SRPK1. Interacts with NXF1. Interacts with CCNL1, CCNL2 and CDK11B. Interacts with RRP1B. Interacts (when phosphorylated in its RS domain) with TNPO3; promoting nuclear import. Interacts with ILDR1 (via C-terminus) and ILDR2. Post-translationally, phosphorylated by CLK1, CLK2, CLK3 and CLK4. Phosphorylated by SRPK1 at multiple serines in its RS domain via a directional (C-terminal to N-terminal) and a dual-track mechanism incorporating both processive phosphorylation (in which the kinase stays attached to the substrate after each round of phosphorylation) and distributive phosphorylation steps (in which the kinase and substrate dissociate after each phosphorylation event). The RS domain of SRSF1 binds to a docking groove in the large lobe of the kinase domain of SRPK1 and this induces certain structural changes in SRPK1 and/or RRM 2 domain of SRSF1, allowing RRM 2 to bind the kinase and initiate phosphorylation. The cycles continue for several phosphorylation steps in a processive manner (steps 1-8) until the last few phosphorylation steps (approximately steps 9-12). During that time, a mechanical stress induces the unfolding of the beta-4 motif in RRM 2, which then docks at the docking groove of SRPK1. This also signals RRM 2 to begin to dissociate, which facilitates SRSF1 dissociation after phosphorylation is completed. In terms of processing, asymmetrically dimethylated at arginines, probably by PRMT1, methylation promotes localization to nuclear speckles.

Its subcellular location is the cytoplasm. The protein localises to the nucleus speckle. In terms of biological role, plays a role in preventing exon skipping, ensuring the accuracy of splicing and regulating alternative splicing. Interacts with other spliceosomal components, via the RS domains, to form a bridge between the 5'- and 3'-splice site binding components, U1 snRNP and U2AF. Can stimulate binding of U1 snRNP to a 5'-splice site-containing pre-mRNA. Binds to purine-rich RNA sequences, either the octamer, 5'-RGAAGAAC-3' (r=A or G) or the decamers, AGGACAGAGC/AGGACGAAGC. Binds preferentially to the 5'-CGAGGCG-3' motif in vitro. Three copies of the octamer constitute a powerful splicing enhancer in vitro, the ASF/SF2 splicing enhancer (ASE) which can specifically activate ASE-dependent splicing. May function as export adapter involved in mRNA nuclear export through the TAP/NXF1 pathway. This is Serine/arginine-rich splicing factor 1 (SRSF1) from Bos taurus (Bovine).